Reading from the N-terminus, the 693-residue chain is Elongation factor G (693 aa).

Residues 8–282 (EKTRNIGIMA…AVVDYLPSPL (275 aa)) enclose the tr-type G domain. GTP-binding positions include 17–24 (AHVDAGKT), 81–85 (DTPGH), and 135–138 (NKMD).

Belongs to the TRAFAC class translation factor GTPase superfamily. Classic translation factor GTPase family. EF-G/EF-2 subfamily.

It localises to the cytoplasm. Functionally, catalyzes the GTP-dependent ribosomal translocation step during translation elongation. During this step, the ribosome changes from the pre-translocational (PRE) to the post-translocational (POST) state as the newly formed A-site-bound peptidyl-tRNA and P-site-bound deacylated tRNA move to the P and E sites, respectively. Catalyzes the coordinated movement of the two tRNA molecules, the mRNA and conformational changes in the ribosome. This is Elongation factor G from Streptococcus mutans serotype c (strain ATCC 700610 / UA159).